The chain runs to 450 residues: 3',5'-cyclic-AMP phosphodiesterase 7B (450 aa).

Residues Leu97–Gln420 enclose the PDEase domain. His173 acts as the Proton donor in catalysis. 4 residues coordinate a divalent metal cation: His177, His213, Asp214, and Asp323. The interval Pro418–Pro450 is disordered. At Ser426 the chain carries Phosphoserine. Residues Glu441–Pro450 are compositionally biased toward acidic residues.

The protein belongs to the cyclic nucleotide phosphodiesterase family. PDE7 subfamily. A divalent metal cation is required as a cofactor. In terms of tissue distribution, highly expressed in brain. Also expressed in heart, liver, skeletal muscle and pancreas.

The enzyme catalyses 3',5'-cyclic AMP + H2O = AMP + H(+). It functions in the pathway purine metabolism; 3',5'-cyclic AMP degradation; AMP from 3',5'-cyclic AMP: step 1/1. With respect to regulation, inhibited by dipyridamole, IBMX and SCH 51866. Insensitive to zaprinast, rolipram, and milrinone. Functionally, hydrolyzes the second messenger cAMP, which is a key regulator of many important physiological processes. May be involved in the control of cAMP-mediated neural activity and cAMP metabolism in the brain. The polypeptide is 3',5'-cyclic-AMP phosphodiesterase 7B (Homo sapiens (Human)).